Here is a 1239-residue protein sequence, read N- to C-terminus: Zinc finger and BTB domain-containing protein 40 (1239 aa).

The BTB domain maps to 24–87 (CDCTISIGTI…MYTGKLPVGK (64 aa)). 3 disordered regions span residues 130–231 (SAPS…TSTE), 687–732 (HLEA…PDPA), and 779–801 (KELDKHQLEAHGAGGEPDAPKKK). The span at 136–145 (TFRKEPEKPQ) shows a compositional bias: basic and acidic residues. Residues 181-199 (SVSQEMSVNSPTAQESQRN) are compositionally biased toward polar residues. Ser190 bears the Phosphoserine mark. Low complexity predominate over residues 200–212 (AETPAETPTTAEA). Residues 687-703 (HLEANNKEDEKAAKEDS) show a composition bias toward basic and acidic residues. Ser703 is subject to Phosphoserine. Positions 705-719 (PGEQNDQGETGSLPG) are enriched in polar residues. 10 C2H2-type zinc fingers span residues 807-830 (VTCDLCGREFAHASGMQYHKLTEH), 836-858 (FSCEECGAKFAANSTLKNHLRLH), 864-887 (FMCKHCLMTFTQASALAYHTKKKH), 893-915 (YACQYCDAVFAQSIELSRHVRTH), 921-944 (YVCRDCGKGFRQANGLSIHLHTFH), 950-973 (YDCKKCRMSFPTLQDHRKHIHEVH), 978-1000 (HPCPTCGKIFSAPSMLERHVVTH), 1006-1029 (FSCGICNKAYQQLSGLWYHNRTHH), 1046-1069 (LQCSSCDKTFPNTIEHKKHIKAEH), and 1075-1098 (HECDQCKELFPTPALLQVHVKCQH). Lys1066 participates in a covalent cross-link: Glycyl lysine isopeptide (Lys-Gly) (interchain with G-Cter in SUMO2). A C2H2-type 11; atypical zinc finger spans residues 1104-1127 (FRCLYCAATFRFPGALQHHVTTEH). The C2H2-type 12 zinc-finger motif lies at 1135-1158 (FPCELCGELFTSQAQLDSHLESEH).

It belongs to the krueppel C2H2-type zinc-finger protein family.

It localises to the nucleus. Its function is as follows. May be involved in transcriptional regulation. This is Zinc finger and BTB domain-containing protein 40 (ZBTB40) from Homo sapiens (Human).